The primary structure comprises 168 residues: CASP-like protein 1U1 (168 aa).

Residues 1–6 (MDGAAR) lie on the Cytoplasmic side of the membrane. A helical transmembrane segment spans residues 7 to 27 (AVSLFFRIAVVGLSVAAAVVM). Topologically, residues 28 to 49 (ATASQAFPFNYGGAVSYTKYPA) are extracellular. A helical membrane pass occupies residues 50–70 (FVYFVVAAVVSAVCSAAALYL). At 71–80 (SVVREAAAGW) the chain is on the cytoplasmic side. A helical transmembrane segment spans residues 81 to 101 (AVALLDVVTMGLLFSAAGAVF). The Extracellular portion of the chain corresponds to 102-138 (AVRRMAPLYLGVAGADTVAGRWVNGEFCHAAGAFCWR). Residues 139–159 (VTTSAIICAFAAAAVSVAVLT) traverse the membrane as a helical segment. The Cytoplasmic segment spans residues 160-168 (KGARHRGKH).

Belongs to the Casparian strip membrane proteins (CASP) family. As to quaternary structure, homodimer and heterodimers.

The protein localises to the cell membrane. This is CASP-like protein 1U1 from Oryza sativa subsp. japonica (Rice).